A 349-amino-acid chain; its full sequence is Nicotinate-nucleotide--dimethylbenzimidazole phosphoribosyltransferase (349 aa).

The active-site Proton acceptor is the Glu315.

The protein belongs to the CobT family.

The enzyme catalyses 5,6-dimethylbenzimidazole + nicotinate beta-D-ribonucleotide = alpha-ribazole 5'-phosphate + nicotinate + H(+). Its pathway is nucleoside biosynthesis; alpha-ribazole biosynthesis; alpha-ribazole from 5,6-dimethylbenzimidazole: step 1/2. Its function is as follows. Catalyzes the synthesis of alpha-ribazole-5'-phosphate from nicotinate mononucleotide (NAMN) and 5,6-dimethylbenzimidazole (DMB). The sequence is that of Nicotinate-nucleotide--dimethylbenzimidazole phosphoribosyltransferase from Variovorax paradoxus (strain S110).